The sequence spans 217 residues: Uracil-DNA glycosylase (217 aa).

Aspartate 62 acts as the Proton acceptor in catalysis.

It belongs to the uracil-DNA glycosylase (UDG) superfamily. UNG family.

Its subcellular location is the cytoplasm. It carries out the reaction Hydrolyzes single-stranded DNA or mismatched double-stranded DNA and polynucleotides, releasing free uracil.. In terms of biological role, excises uracil residues from the DNA which can arise as a result of misincorporation of dUMP residues by DNA polymerase or due to deamination of cytosine. The polypeptide is Uracil-DNA glycosylase (Streptococcus pneumoniae (strain JJA)).